The sequence spans 265 residues: Dehydrogenase RED2 (265 aa).

Residues 6 to 26 form a helical membrane-spanning segment; sequence SFLLSKLFLCIALCTAYVAFS. Asparagine 45 is a glycosylation site (N-linked (GlcNAc...) asparagine). A helical membrane pass occupies residues 47–67; the sequence is TSTVFGLTIVAIGLSALSSWL. An N-linked (GlcNAc...) asparagine glycan is attached at asparagine 74. Valine 89 is a binding site for NADP(+). Asparagine 127 is a glycosylation site (N-linked (GlcNAc...) asparagine). The NADP(+) site is built by aspartate 136 and asparagine 163. Asparagine 176 carries N-linked (GlcNAc...) asparagine glycosylation. Residue serine 216 is the Proton donor of the active site. NADP(+)-binding residues include tyrosine 228 and lysine 232. Tyrosine 228 (proton acceptor) is an active-site residue. Lysine 232 serves as the catalytic Lowers pKa of active site Tyr.

It belongs to the short-chain dehydrogenases/reductases (SDR) family.

It is found in the membrane. The catalysed reaction is a primary alcohol + NAD(+) = an aldehyde + NADH + H(+). The enzyme catalyses a secondary alcohol + NAD(+) = a ketone + NADH + H(+). The protein operates within mycotoxin biosynthesis. In terms of biological role, dehydrogenase; part of the Tox1B locus, one of the 2 loci that mediate the biosynthesis of T-toxin, a family of linear polyketides 37 to 45 carbons in length, of which the major component is 41 carbons, and which leads to high virulence to maize. One of the PKSs (PKS1 or PKS2) could synthesize a precursor, used subsequently by the other PKS as starter unit, to add additional carbons. Variability in the length of the final carbon backbone C35-47 could be achieved by varying the number of condensation cycles, or use of different starter or extender units or might be due to decarboxylation of the penultimate product, catalyzed by DEC1. Additional proteins are required for the biosynthesis of T-toxin, including oxidoreductases RED1, RED2, RED3, LAM1 and OXI1, as well as esterase TOX9. The polypeptide is Dehydrogenase RED2 (Cochliobolus heterostrophus (strain C4 / ATCC 48331 / race T) (Southern corn leaf blight fungus)).